A 273-amino-acid polypeptide reads, in one-letter code: Proteasome subunit beta (273 aa).

Residues 1-50 constitute a propeptide, removed in mature form; by autocatalysis; sequence MRKDGARLALPLFDPRHDPGPDFAALVSRDAARTVPTSGDGSLGAQVPHG. T51 serves as the catalytic Nucleophile.

Belongs to the peptidase T1B family. In terms of assembly, the 20S proteasome core is composed of 14 alpha and 14 beta subunits that assemble into four stacked heptameric rings, resulting in a barrel-shaped structure. The two inner rings, each composed of seven catalytic beta subunits, are sandwiched by two outer rings, each composed of seven alpha subunits. The catalytic chamber with the active sites is on the inside of the barrel. Has a gated structure, the ends of the cylinder being occluded by the N-termini of the alpha-subunits. Is capped by the proteasome-associated ATPase, ARC.

Its subcellular location is the cytoplasm. The catalysed reaction is Cleavage of peptide bonds with very broad specificity.. It functions in the pathway protein degradation; proteasomal Pup-dependent pathway. The formation of the proteasomal ATPase ARC-20S proteasome complex, likely via the docking of the C-termini of ARC into the intersubunit pockets in the alpha-rings, may trigger opening of the gate for substrate entry. Interconversion between the open-gate and close-gate conformations leads to a dynamic regulation of the 20S proteasome proteolysis activity. Functionally, component of the proteasome core, a large protease complex with broad specificity involved in protein degradation. The protein is Proteasome subunit beta of Acidimicrobium ferrooxidans (strain DSM 10331 / JCM 15462 / NBRC 103882 / ICP).